Reading from the N-terminus, the 61-residue chain is Large ribosomal subunit protein uL30 (61 aa).

Belongs to the universal ribosomal protein uL30 family. Part of the 50S ribosomal subunit.

This chain is Large ribosomal subunit protein uL30, found in Bordetella parapertussis (strain 12822 / ATCC BAA-587 / NCTC 13253).